The primary structure comprises 136 residues: Histone H3.2 (136 aa).

Residues methionine 1–arginine 43 form a disordered region. Lysine 5 carries the N6-methylated lysine modification. Lysine 10 is modified (N6-acetyllysine; alternate). Lysine 10 carries the N6-methylated lysine; alternate modification. A Phosphoserine modification is found at serine 11. Phosphothreonine is present on threonine 12. Lysine 15 carries the N6-acetyllysine modification. Lysine 19 and lysine 24 each carry N6-acetyllysine; alternate. Residues lysine 19 and lysine 24 each carry the N6-methylated lysine; alternate modification. Position 28 is an N6-methylated lysine (lysine 28). The residue at position 29 (serine 29) is a Phosphoserine. Lysine 37 bears the N6-methylated lysine mark.

Belongs to the histone H3 family. In terms of assembly, the nucleosome is a histone octamer containing two molecules each of H2A, H2B, H3 and H4 assembled in one H3-H4 heterotetramer and two H2A-H2B heterodimers. The octamer wraps approximately 147 bp of DNA. Post-translationally, acetylation is generally linked to gene activation. Can be acetylated to form H3K9ac, H3K14ac, H3K18ac and H3K23ac. H3K9ac could compete with H3K9me and prevent gene silencing. H3K9ac is restricted to euchromatin. In terms of processing, methylated to form mainly H3K4me, H3K9me, H3K18me, H3K23me, H3K27me and H3K36me. H3K4me1/2/3, H3K9me3, H3K27me3 and H3K36me1/2/3 are typical marks for euchromatin, whereas heterochromatic chromocenters are enriched in H3K9me1/2 and H3K27me1/2. H2BK143ub1 is probably prerequisite for H3K4me. Can be phosphorylated to form H3S10ph, H3T11ph and H3S28ph.

The protein resides in the nucleus. It is found in the chromosome. Its function is as follows. Core component of nucleosome. Nucleosomes wrap and compact DNA into chromatin, limiting DNA accessibility to the cellular machineries which require DNA as a template. Histones thereby play a central role in transcription regulation, DNA repair, DNA replication and chromosomal stability. DNA accessibility is regulated via a complex set of post-translational modifications of histones, also called histone code, and nucleosome remodeling. This chain is Histone H3.2, found in Triticum aestivum (Wheat).